The primary structure comprises 509 residues: MNARTEPEVFDTLAALIAVRAAQWPDKPYLLSPDSGHALTFGALATDAGTLGRSYAAAGLGSGQTVSVYLPNGEQTARLLLGTMACGLVVNPINLLCQPAQLRYILAHSDTRLVFTWPDGEAAIREALREAGLDVPVLVTAPDANSLPALPATHDAASPLPPPQPDAPALLMYTSGTTGTPKGVLLTQRNLVANGTNVSREHCLGPADRVLATLPLYHINGLVVTAIAPLVHGGSVVMPMRFSASAFWQDSARHGCTWLNVVPTIIAYLLNDPHGQAPAGVRFCRSASAALPPEHHRAFEARFGIGVIETMGMTETAAPAFSNPLDPGQRRIGSIGRPSGTRARVLGRDGKPAPDGQVGEIVLQGESVMAGYYKAPDITREAFTHDGWLRTGDLGYRDADGYFYISGRAKELIIKGGENIAPREIDEALLRHPGVLEAAAVGVPDPAYGQEIVAYVVMREAARCDDAALRAHCLRELGRYKTPKEFRFIAELPRGPSGKVQRLKLLNHA.

The tract at residues 320 to 340 (AFSNPLDPGQRRIGSIGRPSG) is disordered.

The protein belongs to the ATP-dependent AMP-binding enzyme family.

It is found in the cytoplasm. It carries out the reaction sulfoacetate + ATP + CoA = sulfoacetyl-CoA + AMP + diphosphate. Functionally, involved in the degradation of sulfoacetate, a widespread natural product. Catalyzes the CoA- and ATP-dependent conversion of sulfoacetate to sulfoacetyl-CoA and AMP. This chain is Sulfoacetate--CoA ligase, found in Cupriavidus necator (strain ATCC 17699 / DSM 428 / KCTC 22496 / NCIMB 10442 / H16 / Stanier 337) (Ralstonia eutropha).